Consider the following 264-residue polypeptide: uncharacterized protein (264 aa).

Helical transmembrane passes span 19-39 (LFPAVIFASLAITQIIPLPFL), 42-62 (YDWLLIICVLMQLWMVRSGLE), 69-89 (VITLFHLIGLALELFKVHMGS), 100-120 (IFGVPLYSGFMYASVASYLCQ), 136-156 (FAVVPLAAAIYLNFFTHHFSI), 160-180 (WWLSGLVIIVFWQTWVTYEVN), 192-212 (FILIGFFIWIAENIATFFGAW), and 223-243 (LVHLGKVSSWLLLVIVSFLIV).

The protein localises to the cell membrane. This is an uncharacterized protein from Bacillus subtilis (strain 168).